The following is a 295-amino-acid chain: Ribosomal RNA small subunit methyltransferase A (295 aa).

Residues Asn-33, Val-35, Gly-60, Glu-81, Asp-111, and Asn-129 each coordinate S-adenosyl-L-methionine.

Belongs to the class I-like SAM-binding methyltransferase superfamily. rRNA adenine N(6)-methyltransferase family. RsmA subfamily.

It localises to the cytoplasm. It carries out the reaction adenosine(1518)/adenosine(1519) in 16S rRNA + 4 S-adenosyl-L-methionine = N(6)-dimethyladenosine(1518)/N(6)-dimethyladenosine(1519) in 16S rRNA + 4 S-adenosyl-L-homocysteine + 4 H(+). Functionally, specifically dimethylates two adjacent adenosines (A1518 and A1519) in the loop of a conserved hairpin near the 3'-end of 16S rRNA in the 30S particle. May play a critical role in biogenesis of 30S subunits. In Streptomyces avermitilis (strain ATCC 31267 / DSM 46492 / JCM 5070 / NBRC 14893 / NCIMB 12804 / NRRL 8165 / MA-4680), this protein is Ribosomal RNA small subunit methyltransferase A.